The sequence spans 720 residues: Dedicator of cytokinesis protein 9 (720 aa).

The region spanning 186-638 (KSYASTPELR…LSDIIVPRIC (453 aa)) is the DOCKER domain. The interaction with CDC42 stretch occupies residues 277–638 (DEEASMMEDV…LSDIIVPRIC (362 aa)).

The protein belongs to the DOCK family. In terms of assembly, homodimer. Interacts preferentially with nucleotide-depleted CDC42.

It localises to the endomembrane system. Guanine nucleotide-exchange factor (GEF) that activates CDC42 by exchanging bound GDP for free GTP. Overexpression induces filopodia formation. This Rattus norvegicus (Rat) protein is Dedicator of cytokinesis protein 9 (Dock9).